The following is an 87-amino-acid chain: NAD(P)H-quinone oxidoreductase subunit O (87 aa).

A compositionally biased stretch (basic and acidic residues) spans 1 to 10 (MSEQTGKVDD). Residues 1–23 (MSEQTGKVDDSQSPPKVQKKLRK) are disordered.

The protein belongs to the complex I NdhO subunit family. NDH-1 can be composed of about 15 different subunits; different subcomplexes with different compositions have been identified which probably have different functions.

It is found in the cellular thylakoid membrane. It catalyses the reaction a plastoquinone + NADH + (n+1) H(+)(in) = a plastoquinol + NAD(+) + n H(+)(out). The catalysed reaction is a plastoquinone + NADPH + (n+1) H(+)(in) = a plastoquinol + NADP(+) + n H(+)(out). In terms of biological role, NDH-1 shuttles electrons from an unknown electron donor, via FMN and iron-sulfur (Fe-S) centers, to quinones in the respiratory and/or the photosynthetic chain. The immediate electron acceptor for the enzyme in this species is believed to be plastoquinone. Couples the redox reaction to proton translocation, and thus conserves the redox energy in a proton gradient. Cyanobacterial NDH-1 also plays a role in inorganic carbon-concentration. This Prochlorococcus marinus (strain NATL2A) protein is NAD(P)H-quinone oxidoreductase subunit O.